A 764-amino-acid polypeptide reads, in one-letter code: Transient receptor potential cation channel subfamily V member 2 (764 aa).

Residues 1-46 are disordered; that stretch reads MTSPSSSPVFRLETLDGGQEDGSEADRGKLDFGSGLPPMESQFQGE. Residues 1–388 are required for interaction with SLC50A1; the sequence is MTSPSSSPVF…LLQAKWDLLI (388 aa). The Cytoplasmic portion of the chain corresponds to 1–390; the sequence is MTSPSSSPVF…QAKWDLLIPK (390 aa). A Phosphoserine modification is found at Ser-6. ANK repeat units lie at residues 72-114, 115-161, 162-207, 208-243, 244-292, and 293-319; these read NRFD…TEGS, TGKT…DDYY, RGHS…TCFY, FGELPLSLAACTKQWDVVSYLLENPHQPASLQATDS, QGNT…IRNL, and QDLTPLKLAAKEGKIEIFRHILQREFS. A helical transmembrane segment spans residues 391–411; it reads FFLNFLCNLIYMFIFTAVAYH. Residues 412-434 are Extracellular-facing; that stretch reads QPTLKKQAAPHLKAEVGNSMLLT. Residues 435–455 traverse the membrane as a helical segment; it reads GHILILLGGIYLLVGQLWYFW. At 456–471 the chain is on the cytoplasmic side; sequence RRHVFIWISFIDSYFE. The helical transmembrane segment at 472–492 threads the bilayer; it reads ILFLFQALLTVVSQVLCFLAI. Glu-493 is a topological domain (extracellular). Residues 494-514 form a helical membrane-spanning segment; sequence WYLPLLVSALVLGWLNLLYYT. At 515-537 the chain is on the cytoplasmic side; sequence RGFQHTGIYSVMIQKVILRDLLR. The helical transmembrane segment at 538–558 threads the bilayer; sequence FLLIYLVFLFGFAVALVSLSQ. The segment at 562–585 is disordered; that stretch reads RPEAPTGPNATESVQPMEGQEDEG. N-linked (GlcNAc...) asparagine glycosylation occurs at Asn-570. The segment at residues 572-609 is an intramembrane region (pore-forming); the sequence is TESVQPMEGQEDEGNGAQYRGILEASLELFKFTIGMGE. The helical transmembrane segment at 622-642 threads the bilayer; sequence VLLLLLAYVLLTYILLLNMLI. Over 643-764 the chain is Cytoplasmic; that stretch reads ALMSETVNSV…YVPVQLLQSN (122 aa). Positions 725 to 756 are disordered; that stretch reads PSGAGVPRTLENPVLASPPKEDEDGASEENYV. Phosphoserine occurs at positions 751 and 763.

The protein belongs to the transient receptor (TC 1.A.4) family. TrpV subfamily. TRPV2 sub-subfamily. In terms of assembly, homotetramer. Interacts with a cAMP-dependent protein kinase type II regulatory subunit (PRKAR2A or PRKAR2B) and ACBD3. Interacts with SLC50A1; the interaction probably occurs intracellularly and depends on TRPV2 N-glycosylation. Post-translationally, N-glycosylated. Phosphorylated by PKA.

It is found in the cell membrane. Its subcellular location is the cytoplasm. The protein localises to the melanosome. The catalysed reaction is Ca(2+)(in) = Ca(2+)(out). It catalyses the reaction Mg(2+)(in) = Mg(2+)(out). The enzyme catalyses Na(+)(in) = Na(+)(out). It carries out the reaction K(+)(in) = K(+)(out). Functionally, calcium-permeable, non-selective cation channel with an outward rectification. Seems to be regulated, at least in part, by IGF1, PDGF and neuropeptide head activator. May transduce physical stimuli in mast cells. Activated by temperatures higher than 52 degrees Celsius; is not activated by vanilloids and acidic pH. The sequence is that of Transient receptor potential cation channel subfamily V member 2 (TRPV2) from Homo sapiens (Human).